A 485-amino-acid chain; its full sequence is Pumilio domain-containing protein 7 (485 aa).

The segment at 29–72 is disordered; it reads NKTHKNKNPKPPVKLLPYRHGSNTTSSDSDSYIFNSGSGSSDAE. Residues 49–71 are compositionally biased toward polar residues; the sequence is GSNTTSSDSDSYIFNSGSGSSDA. Pumilio repeat units follow at residues 86–124, 128–163, 164–200, 201–236, 237–279, 287–324, 326–361, and 370–411; these read DVLL…AVFE, ESTT…ELLR, QMID…QLIQ, ELST…TFFV, HFLS…FRIQ, CIVR…TIID, CLLR…EMME, and DVES…RELP. Positions 439-454 are RNA-binding; the sequence is FSSGKKIIDSVMRHGV.

Its function is as follows. RNA-binding protein that binds to the consensus sequence 5'-CUCUGUAUCUUGU-3' in mRNA 3'-UTRs and modulates mRNA expression and stability. Functions redundantly with puf-5 and puf-6 in oocyte formation and organization, early embryonic cell divisions, and repression of expression of glp-1 and other maternal mRNAs in late oogenesis. The chain is Pumilio domain-containing protein 7 from Caenorhabditis elegans.